The sequence spans 143 residues: Nucleoside diphosphate kinase (143 aa).

Lys-11, Phe-59, Arg-87, Thr-93, Arg-104, and Asn-114 together coordinate ATP. Catalysis depends on His-117, which acts as the Pros-phosphohistidine intermediate.

This sequence belongs to the NDK family. Homotetramer. The cofactor is Mg(2+).

The protein localises to the cytoplasm. It carries out the reaction a 2'-deoxyribonucleoside 5'-diphosphate + ATP = a 2'-deoxyribonucleoside 5'-triphosphate + ADP. The enzyme catalyses a ribonucleoside 5'-diphosphate + ATP = a ribonucleoside 5'-triphosphate + ADP. Functionally, major role in the synthesis of nucleoside triphosphates other than ATP. The ATP gamma phosphate is transferred to the NDP beta phosphate via a ping-pong mechanism, using a phosphorylated active-site intermediate. This chain is Nucleoside diphosphate kinase, found in Erwinia tasmaniensis (strain DSM 17950 / CFBP 7177 / CIP 109463 / NCPPB 4357 / Et1/99).